We begin with the raw amino-acid sequence, 440 residues long: Calcium/calmodulin-regulated receptor-like kinase 1 (440 aa).

Residues 8–28 form a helical membrane-spanning segment; that stretch reads LIVGISLGLVIGVVLAISALF. Positions 28–228 are calmodulin binding; that stretch reads FCFRYHRKKS…ARGLEYLHDG (201 aa). Residues 113–380 enclose the Protein kinase domain; sequence CNFTTLIGQG…DIVQVLTRVI (268 aa). ATP contacts are provided by residues 119 to 127 and Lys-141; that span reads IGQGAFGPV. Tyr-186 bears the Phosphotyrosine mark. Asp-237 acts as the Proton acceptor in catalysis. Ser-241 is subject to Phosphoserine. A Phosphothreonine modification is found at Thr-274. Tyr-282 bears the Phosphotyrosine mark. A calmodulin binding region spans residues 369–440; it reads MRDIVQVLTR…DSSIAEDVIL (72 aa). Residues 386 to 427 form a disordered region; the sequence is RKRQKNSPSPSPRLPPPPPIVEESEGELTANGSLRSEIHRRD. The segment covering 394–405 has biased composition (pro residues); the sequence is SPSPRLPPPPPI.

It belongs to the protein kinase superfamily. Ser/Thr protein kinase family. Interacts with calmodulin (CaM) in a calcium- (Ca(2+)-) dependent manner. Binds to MEKK1. In terms of tissue distribution, similar transcript expression levels in seedlings, roots, leaves, stems and flowers, and lower levels in siliques, but protein accumulates mostly in 7-day-old seedlings, old roots and young leaves and, to a lower extent, in young roots, old leaves, flowers and siliques (at protein level).

Its subcellular location is the cell membrane. It localises to the endosome membrane. The enzyme catalyses L-seryl-[protein] + ATP = O-phospho-L-seryl-[protein] + ADP + H(+). It carries out the reaction L-threonyl-[protein] + ATP = O-phospho-L-threonyl-[protein] + ADP + H(+). Its activity is regulated as follows. Kinase activity is stimulated by calcium/calmodulin, but blocked by chlorpromazine. In terms of biological role, required for cold tolerance, via the activation of MAP kinases activity. Phosphorylates and activates MEKK1 in response to cold in a calcium-dependent manner. In Arabidopsis thaliana (Mouse-ear cress), this protein is Calcium/calmodulin-regulated receptor-like kinase 1.